The chain runs to 318 residues: ATP synthase gamma chain (318 aa).

This sequence belongs to the ATPase gamma chain family. In terms of assembly, F-type ATPases have 2 components, CF(1) - the catalytic core - and CF(0) - the membrane proton channel. CF(1) has five subunits: alpha(3), beta(3), gamma(1), delta(1), epsilon(1). CF(0) has three main subunits: a, b and c.

It is found in the cell membrane. Produces ATP from ADP in the presence of a proton gradient across the membrane. The gamma chain is believed to be important in regulating ATPase activity and the flow of protons through the CF(0) complex. The chain is ATP synthase gamma chain from Lactobacillus gasseri (strain ATCC 33323 / DSM 20243 / BCRC 14619 / CIP 102991 / JCM 1131 / KCTC 3163 / NCIMB 11718 / NCTC 13722 / AM63).